Consider the following 209-residue polypeptide: Cytidylate kinase (209 aa).

Position 7–15 (7–15 (GPAASGKGT)) interacts with ATP.

This sequence belongs to the cytidylate kinase family. Type 1 subfamily.

It localises to the cytoplasm. The enzyme catalyses CMP + ATP = CDP + ADP. It carries out the reaction dCMP + ATP = dCDP + ADP. The chain is Cytidylate kinase from Afipia carboxidovorans (strain ATCC 49405 / DSM 1227 / KCTC 32145 / OM5) (Oligotropha carboxidovorans).